The chain runs to 167 residues: Phosphopantetheine adenylyltransferase (167 aa).

Residue Thr9 participates in substrate binding. ATP contacts are provided by residues Thr9–Phe10 and His17. Substrate contacts are provided by Lys41, Leu73, and Arg87. Residues Gly88 to Arg90, Glu98, and Tyr123 to Thr129 contribute to the ATP site.

It belongs to the bacterial CoaD family. In terms of assembly, homohexamer. Mg(2+) serves as cofactor.

The protein localises to the cytoplasm. It catalyses the reaction (R)-4'-phosphopantetheine + ATP + H(+) = 3'-dephospho-CoA + diphosphate. Its pathway is cofactor biosynthesis; coenzyme A biosynthesis; CoA from (R)-pantothenate: step 4/5. Reversibly transfers an adenylyl group from ATP to 4'-phosphopantetheine, yielding dephospho-CoA (dPCoA) and pyrophosphate. The protein is Phosphopantetheine adenylyltransferase of Ralstonia pickettii (strain 12J).